Consider the following 172-residue polypeptide: Small ribosomal subunit protein uS5 (172 aa).

Residues 17-80 (LREKMISVNR…DEARRKMVKV (64 aa)) form the S5 DRBM domain.

Belongs to the universal ribosomal protein uS5 family. Part of the 30S ribosomal subunit. Contacts proteins S4 and S8.

With S4 and S12 plays an important role in translational accuracy. Functionally, located at the back of the 30S subunit body where it stabilizes the conformation of the head with respect to the body. This chain is Small ribosomal subunit protein uS5, found in Cupriavidus pinatubonensis (strain JMP 134 / LMG 1197) (Cupriavidus necator (strain JMP 134)).